The following is a 65-amino-acid chain: Antimicrobial peptide 1 (65 aa).

The first 27 residues, 1–27 (MAKVSSAYLKFALVMILLLSVISAVMS), serve as a signal peptide directing secretion. 3 disulfide bridges follow: Cys30–Cys47, Cys37–Cys51, and Cys46–Cys62.

It belongs to the AMP family. Seed specific.

The protein localises to the secreted. Functionally, possesses antifungal activity. The sequence is that of Antimicrobial peptide 1 from Phytolacca americana (American pokeweed).